The primary structure comprises 507 residues: ATP synthase subunit alpha (507 aa).

Glycine 168 to threonine 175 contacts ATP.

Belongs to the ATPase alpha/beta chains family. As to quaternary structure, F-type ATPases have 2 components, CF(1) - the catalytic core - and CF(0) - the membrane proton channel. CF(1) has five subunits: alpha(3), beta(3), gamma(1), delta(1), epsilon(1). CF(0) has three main subunits: a(1), b(2) and c(9-12). The alpha and beta chains form an alternating ring which encloses part of the gamma chain. CF(1) is attached to CF(0) by a central stalk formed by the gamma and epsilon chains, while a peripheral stalk is formed by the delta and b chains.

The protein localises to the cell membrane. It carries out the reaction ATP + H2O + 4 H(+)(in) = ADP + phosphate + 5 H(+)(out). Produces ATP from ADP in the presence of a proton gradient across the membrane. The alpha chain is a regulatory subunit. The sequence is that of ATP synthase subunit alpha from Mesomycoplasma hyopneumoniae (strain 232) (Mycoplasma hyopneumoniae).